A 157-amino-acid polypeptide reads, in one-letter code: Crossover junction endodeoxyribonuclease RuvC (157 aa).

Residues Asp-7, Glu-66, and Asp-139 contribute to the active site. Asp-7, Glu-66, and Asp-139 together coordinate Mg(2+).

The protein belongs to the RuvC family. As to quaternary structure, homodimer which binds Holliday junction (HJ) DNA. The HJ becomes 2-fold symmetrical on binding to RuvC with unstacked arms; it has a different conformation from HJ DNA in complex with RuvA. In the full resolvosome a probable DNA-RuvA(4)-RuvB(12)-RuvC(2) complex forms which resolves the HJ. Requires Mg(2+) as cofactor.

Its subcellular location is the cytoplasm. It catalyses the reaction Endonucleolytic cleavage at a junction such as a reciprocal single-stranded crossover between two homologous DNA duplexes (Holliday junction).. Its function is as follows. The RuvA-RuvB-RuvC complex processes Holliday junction (HJ) DNA during genetic recombination and DNA repair. Endonuclease that resolves HJ intermediates. Cleaves cruciform DNA by making single-stranded nicks across the HJ at symmetrical positions within the homologous arms, yielding a 5'-phosphate and a 3'-hydroxyl group; requires a central core of homology in the junction. The consensus cleavage sequence is 5'-(A/T)TT(C/G)-3'. Cleavage occurs on the 3'-side of the TT dinucleotide at the point of strand exchange. HJ branch migration catalyzed by RuvA-RuvB allows RuvC to scan DNA until it finds its consensus sequence, where it cleaves and resolves the cruciform DNA. This is Crossover junction endodeoxyribonuclease RuvC from Helicobacter pylori (strain Shi470).